The sequence spans 413 residues: MTLNPAPNSFRTGPDERGRFGIFGGRFVAETLMPLILDLEKAYAEAKADPSFKADMESYGTHYIGRPSPLYYAERLTEHLRASAPAGQGAKIYFKREELNHTGSHKVNNVLGQILLARRMGKPRIIAETGAGQHGVATATLCARFGLKCVVYMGAVDVERQAPNVFRMKMLGAEVVPVQSGTRTLKDAMNEALRDWVTNVADTFYCIGTVAGPHPYPAMVRDFQSVIGIETKQQMLALEGRLPDSLVACIGGGSNAMGLFHPFLDDREVEIYGVEAAGHGVQSGLHAASLTGGRPGVLHGNRTYLLMNEDGQIADAHSISAGLDYPGIGPEHAWLHEMGRVTYLSATDTETLEAFKLCSMLEGIIPALEPAHALSKVLELAPTKPAEHLMVMNLSGRGDKDIPQVAQIFGQTL.

Lys-106 bears the N6-(pyridoxal phosphate)lysine mark.

This sequence belongs to the TrpB family. As to quaternary structure, tetramer of two alpha and two beta chains. Requires pyridoxal 5'-phosphate as cofactor.

The catalysed reaction is (1S,2R)-1-C-(indol-3-yl)glycerol 3-phosphate + L-serine = D-glyceraldehyde 3-phosphate + L-tryptophan + H2O. It functions in the pathway amino-acid biosynthesis; L-tryptophan biosynthesis; L-tryptophan from chorismate: step 5/5. The beta subunit is responsible for the synthesis of L-tryptophan from indole and L-serine. The polypeptide is Tryptophan synthase beta chain (Methylorubrum populi (strain ATCC BAA-705 / NCIMB 13946 / BJ001) (Methylobacterium populi)).